The chain runs to 342 residues: Uricase (342 aa).

Active-site charge relay system residues include K35 and T80. Urate-binding residues include T80, D81, F204, R221, V269, Q270, and N296. H298 (charge relay system) is an active-site residue. The Microbody targeting signal motif lies at 340–342; sequence SHL.

Belongs to the uricase family. In terms of tissue distribution, malpighian tubules.

It localises to the peroxisome. The catalysed reaction is urate + O2 + H2O = 5-hydroxyisourate + H2O2. Its pathway is purine metabolism; urate degradation; (S)-allantoin from urate: step 1/3. Its activity is regulated as follows. Repressed by 20-hydroxyecdysone. Its function is as follows. Catalyzes the oxidation of uric acid to 5-hydroxyisourate, which is further processed to form (S)-allantoin. The sequence is that of Uricase (Uro) from Drosophila virilis (Fruit fly).